A 262-amino-acid polypeptide reads, in one-letter code: Polyamine aminopropyltransferase (262 aa).

The region spanning 1-249 (MWITQEITPY…DIHRAAFALP (249 aa)) is the PABS domain. Asn29 is a binding site for S-methyl-5'-thioadenosine. Spermidine is bound at residue Asp83. Asp155 acts as the Proton acceptor in catalysis.

The protein belongs to the spermidine/spermine synthase family. Homodimer or homotetramer.

Its subcellular location is the cytoplasm. It catalyses the reaction S-adenosyl 3-(methylsulfanyl)propylamine + putrescine = S-methyl-5'-thioadenosine + spermidine + H(+). The protein operates within amine and polyamine biosynthesis; spermidine biosynthesis; spermidine from putrescine: step 1/1. Functionally, catalyzes the irreversible transfer of a propylamine group from the amino donor S-adenosylmethioninamine (decarboxy-AdoMet) to putrescine (1,4-diaminobutane) to yield spermidine. The sequence is that of Polyamine aminopropyltransferase from Helicobacter pylori (strain G27).